We begin with the raw amino-acid sequence, 228 residues long: UPF0758 protein H16_A3033 (228 aa).

The 123-residue stretch at 102-224 (GFDGPAAVRN…IRSLADCCDR (123 aa)) folds into the MPN domain. Positions 173, 175, and 186 each coordinate Zn(2+). The short motif at 173-186 (HNHPRGTTAPSQSD) is the JAMM motif element.

This sequence belongs to the UPF0758 family.

This chain is UPF0758 protein H16_A3033, found in Cupriavidus necator (strain ATCC 17699 / DSM 428 / KCTC 22496 / NCIMB 10442 / H16 / Stanier 337) (Ralstonia eutropha).